A 436-amino-acid polypeptide reads, in one-letter code: Glutamyl-tRNA reductase (436 aa).

Residues 49-52, Ser118, 123-125, and Gln129 contribute to the substrate site; these read TCNR and EPQ. Catalysis depends on Cys50, which acts as the Nucleophile. 203–208 provides a ligand contact to NADP(+); it reads GAGETI.

Belongs to the glutamyl-tRNA reductase family. In terms of assembly, homodimer.

It catalyses the reaction (S)-4-amino-5-oxopentanoate + tRNA(Glu) + NADP(+) = L-glutamyl-tRNA(Glu) + NADPH + H(+). Its pathway is porphyrin-containing compound metabolism; protoporphyrin-IX biosynthesis; 5-aminolevulinate from L-glutamyl-tRNA(Glu): step 1/2. Its function is as follows. Catalyzes the NADPH-dependent reduction of glutamyl-tRNA(Glu) to glutamate 1-semialdehyde (GSA). This is Glutamyl-tRNA reductase from Actinobacillus pleuropneumoniae serotype 7 (strain AP76).